A 619-amino-acid chain; its full sequence is tRNA uridine 5-carboxymethylaminomethyl modification enzyme MnmG (619 aa).

FAD is bound by residues 14–19 (GAGHAG), valine 126, and serine 181. Residue 273-287 (GPRYCPSIEDKIMRF) participates in NAD(+) binding. Glutamine 370 contacts FAD.

The protein belongs to the MnmG family. As to quaternary structure, homodimer. Heterotetramer of two MnmE and two MnmG subunits. It depends on FAD as a cofactor.

It localises to the cytoplasm. NAD-binding protein involved in the addition of a carboxymethylaminomethyl (cmnm) group at the wobble position (U34) of certain tRNAs, forming tRNA-cmnm(5)s(2)U34. In Syntrophotalea carbinolica (strain DSM 2380 / NBRC 103641 / GraBd1) (Pelobacter carbinolicus), this protein is tRNA uridine 5-carboxymethylaminomethyl modification enzyme MnmG.